A 605-amino-acid chain; its full sequence is Dynein axonemal intermediate chain 2 (605 aa).

7 WD repeats span residues 150–203 (KTIN…IWDL), 208–246 (KPEL…CWDT), 253–294 (AELS…WWDI), 301–347 (TEVV…SCNR), 355–393 (KIVC…IWSE), 399–437 (SIMW…IWDF), and 443–481 (DPTL…LLEV). Residues 568–605 (IKLTPVPQQPSPEEDQVVEEGEEAAGEEGDEEVEEDLA) are disordered. Residues 579 to 605 (PEEDQVVEEGEEAAGEEGDEEVEEDLA) are compositionally biased toward acidic residues.

The protein belongs to the dynein intermediate chain family. In terms of assembly, consists of at least two heavy chains and a number of intermediate and light chains. Interacts with DNAAF2. Interacts with DNAAF6/PIH1D3. Interacts with HEATR2; probably involved in outer arm dynein assembly. Interacts with CFAP53. As to expression, highly expressed in trachea and testis. Expressed in respiratory ciliated cells (at protein level).

Its subcellular location is the cytoplasm. The protein localises to the cytoskeleton. The protein resides in the cilium axoneme. It localises to the dynein axonemal particle. Part of the dynein complex of respiratory cilia. The sequence is that of Dynein axonemal intermediate chain 2 from Homo sapiens (Human).